A 443-amino-acid chain; its full sequence is ATP-dependent protease ATPase subunit HslU (443 aa).

Residues isoleucine 18, 60–65 (GVGKTE), aspartate 256, glutamate 321, and arginine 393 contribute to the ATP site.

It belongs to the ClpX chaperone family. HslU subfamily. As to quaternary structure, a double ring-shaped homohexamer of HslV is capped on each side by a ring-shaped HslU homohexamer. The assembly of the HslU/HslV complex is dependent on binding of ATP.

The protein resides in the cytoplasm. Functionally, ATPase subunit of a proteasome-like degradation complex; this subunit has chaperone activity. The binding of ATP and its subsequent hydrolysis by HslU are essential for unfolding of protein substrates subsequently hydrolyzed by HslV. HslU recognizes the N-terminal part of its protein substrates and unfolds these before they are guided to HslV for hydrolysis. This Escherichia coli O157:H7 (strain EC4115 / EHEC) protein is ATP-dependent protease ATPase subunit HslU.